Here is a 115-residue protein sequence, read N- to C-terminus: Aspartate 1-decarboxylase (115 aa).

The active-site Schiff-base intermediate with substrate; via pyruvic acid is serine 25. Serine 25 carries the pyruvic acid (Ser) modification. Threonine 57 provides a ligand contact to substrate. The active-site Proton donor is tyrosine 58. 73 to 75 (GAA) contacts substrate.

Belongs to the PanD family. As to quaternary structure, heterooctamer of four alpha and four beta subunits. Pyruvate serves as cofactor. Post-translationally, is synthesized initially as an inactive proenzyme, which is activated by self-cleavage at a specific serine bond to produce a beta-subunit with a hydroxyl group at its C-terminus and an alpha-subunit with a pyruvoyl group at its N-terminus.

It is found in the cytoplasm. It catalyses the reaction L-aspartate + H(+) = beta-alanine + CO2. The protein operates within cofactor biosynthesis; (R)-pantothenate biosynthesis; beta-alanine from L-aspartate: step 1/1. Its function is as follows. Catalyzes the pyruvoyl-dependent decarboxylation of aspartate to produce beta-alanine. The polypeptide is Aspartate 1-decarboxylase (Kosmotoga olearia (strain ATCC BAA-1733 / DSM 21960 / TBF 19.5.1)).